The following is a 274-amino-acid chain: Penicillin-insensitive murein endopeptidase (274 aa).

Positions 1 to 19 (MKNTVIALLALLASAGSLA) are cleaved as a signal peptide. Cystine bridges form between Cys-44-Cys-265, Cys-187-Cys-235, and Cys-216-Cys-223. Zn(2+) is bound by residues His-110, His-113, Asp-120, Asp-147, His-150, and His-211. The segment at 224-263 (EDQAPPPPGDGCGAELQSWFEPPKPGSTPPVKKTPPPLPP) is disordered. The segment covering 245–263 (PPKPGSTPPVKKTPPPLPP) has biased composition (pro residues).

This sequence belongs to the peptidase M74 family. As to quaternary structure, dimer. Requires Zn(2+) as cofactor.

The protein resides in the periplasm. Murein endopeptidase that cleaves the D-alanyl-meso-2,6-diamino-pimelyl amide bond that connects peptidoglycan strands. Likely plays a role in the removal of murein from the sacculus. The chain is Penicillin-insensitive murein endopeptidase from Klebsiella pneumoniae subsp. pneumoniae (strain ATCC 700721 / MGH 78578).